We begin with the raw amino-acid sequence, 397 residues long: GTPase Obg (397 aa).

Positions 1 to 159 (MKFVDEATII…RNLRLELKVL (159 aa)) constitute an Obg domain. Positions 128 to 148 (TRFKSSVNRAPRQTSKGSEGE) are disordered. The span at 129–144 (RFKSSVNRAPRQTSKG) shows a compositional bias: polar residues. The region spanning 160-333 (ADVGLLGLPN…LVQAVMRWIE (174 aa)) is the OBG-type G domain. Residues 166–173 (GLPNAGKS), 191–195 (FTTLV), 213–216 (DIPG), 283–286 (NKVD), and 314–316 (SAL) each bind GTP. The Mg(2+) site is built by Ser173 and Thr193. Residues 336–347 (AEQEADNPDFAE) are compositionally biased toward acidic residues. Positions 336–397 (AEQEADNPDF…YDVEVVYAPE (62 aa)) are disordered. The segment covering 349-370 (EAARRRRMDEEARQKIEADRQA) has biased composition (basic and acidic residues). The span at 378 to 390 (DDDDDFDDDDYDV) shows a compositional bias: acidic residues.

It belongs to the TRAFAC class OBG-HflX-like GTPase superfamily. OBG GTPase family. In terms of assembly, monomer. The cofactor is Mg(2+).

Its subcellular location is the cytoplasm. Its function is as follows. An essential GTPase which binds GTP, GDP and possibly (p)ppGpp with moderate affinity, with high nucleotide exchange rates and a fairly low GTP hydrolysis rate. Plays a role in control of the cell cycle, stress response, ribosome biogenesis and in those bacteria that undergo differentiation, in morphogenesis control. This Marinobacter nauticus (strain ATCC 700491 / DSM 11845 / VT8) (Marinobacter aquaeolei) protein is GTPase Obg.